A 294-amino-acid chain; its full sequence is Acetyl-coenzyme A carboxylase carboxyl transferase subunit beta (294 aa).

The CoA carboxyltransferase N-terminal domain occupies Leu-29 to Ala-294. Residues Cys-33, Cys-36, Cys-52, and Cys-55 each contribute to the Zn(2+) site. A C4-type zinc finger spans residues Cys-33–Cys-55.

It belongs to the AccD/PCCB family. As to quaternary structure, acetyl-CoA carboxylase is a heterohexamer composed of biotin carboxyl carrier protein (AccB), biotin carboxylase (AccC) and two subunits each of ACCase subunit alpha (AccA) and ACCase subunit beta (AccD). The cofactor is Zn(2+).

The protein resides in the cytoplasm. It catalyses the reaction N(6)-carboxybiotinyl-L-lysyl-[protein] + acetyl-CoA = N(6)-biotinyl-L-lysyl-[protein] + malonyl-CoA. It participates in lipid metabolism; malonyl-CoA biosynthesis; malonyl-CoA from acetyl-CoA: step 1/1. Component of the acetyl coenzyme A carboxylase (ACC) complex. Biotin carboxylase (BC) catalyzes the carboxylation of biotin on its carrier protein (BCCP) and then the CO(2) group is transferred by the transcarboxylase to acetyl-CoA to form malonyl-CoA. The protein is Acetyl-coenzyme A carboxylase carboxyl transferase subunit beta of Prochlorococcus marinus (strain NATL1A).